Here is a 274-residue protein sequence, read N- to C-terminus: 16S rRNA (guanine(1405)-N(7))-methyltransferase (274 aa).

Residues 102–108, Ala-133, Asp-156, 182–183, Leu-198, and Gln-207 each bind S-adenosyl-L-methionine; these read HISTRER and DL.

Belongs to the methyltransferase superfamily. Aminoglycoside resistance family.

It carries out the reaction guanosine(1405) in 16S rRNA + S-adenosyl-L-methionine = N(7)-methylguanosine(1405) in 16S rRNA + S-adenosyl-L-homocysteine. Specifically methylates the N(7) position of guanine 1405 in 16S rRNA. Confers resistance to various aminoglycosides, including gentamicin, kanamycin and sisomicin. In Micromonospora zionensis, this protein is 16S rRNA (guanine(1405)-N(7))-methyltransferase (sgm).